Consider the following 698-residue polypeptide: Serotransferrin (698 aa).

A signal peptide spans 1–19; sequence MRLAVGALLVCAVLGLCLA. 2 Transferrin-like domains span residues 25–347 and 361–683; these read VRWC…NLRE and VKWC…NLRK. 2 disulfides stabilise this stretch: C28/C67 and C38/C58. R42 is subject to Dimethylated arginine. The O-linked (GalNAc...) serine glycan is linked to S51. Positions 82 and 114 each coordinate Fe(3+). 17 disulfide bridges follow: C137-C213, C156-C350, C177-C193, C180-C196, C190-C198, C246-C260, C358-C615, C364-C396, C374-C387, C421-C693, C437-C656, C469-C542, C493-C684, C503-C517, C514-C525, C582-C596, and C634-C639. Hydrogencarbonate contacts are provided by T139, R143, A145, and G146. Y207 is a binding site for Fe(3+). H268 contributes to the Fe(3+) binding site. Residue S389 is modified to Phosphoserine. Residues D411 and Y445 each contribute to the Fe(3+) site. Hydrogencarbonate-binding residues include T471, R475, A477, and G478. Position 536 (Y536) interacts with Fe(3+). Fe(3+) is bound at residue H604. N-linked (GlcNAc...) asparagine glycosylation occurs at N630. Residue S685 is modified to Phosphoserine.

Belongs to the transferrin family. Monomer. Part of a complex composed of SLC40A1/ferroportin, TF/transferrin and HEPH/hephaestin that transfers iron from cells to transferrin. As to expression, expressed by the liver and secreted in plasma.

It localises to the secreted. Functionally, transferrins are iron binding transport proteins which can bind two Fe(3+) ions in association with the binding of an anion, usually bicarbonate. It is responsible for the transport of iron from sites of absorption and heme degradation to those of storage and utilization. Serum transferrin may also have a further role in stimulating cell proliferation. The protein is Serotransferrin (TF) of Pan troglodytes (Chimpanzee).